The sequence spans 149 residues: Large ribosomal subunit protein bL20m (149 aa).

A mitochondrion-targeting transit peptide spans 1 to 9; it reads MVFLTTRLW.

This sequence belongs to the bacterial ribosomal protein bL20 family. Component of the mitochondrial ribosome large subunit (39S) which comprises a 16S rRNA and about 50 distinct proteins. Interacts with OXA1L.

It is found in the mitochondrion. In Mus musculus (Mouse), this protein is Large ribosomal subunit protein bL20m (Mrpl20).